The sequence spans 115 residues: Large ribosomal subunit protein bL19 (115 aa).

This sequence belongs to the bacterial ribosomal protein bL19 family.

This protein is located at the 30S-50S ribosomal subunit interface and may play a role in the structure and function of the aminoacyl-tRNA binding site. The sequence is that of Large ribosomal subunit protein bL19 from Thermosipho melanesiensis (strain DSM 12029 / CIP 104789 / BI429).